We begin with the raw amino-acid sequence, 211 residues long: Large ribosomal subunit protein bL25 (211 aa).

A compositionally biased stretch (basic and acidic residues) spans Met-1–Gly-18. The segment at Met-1–Ser-20 is disordered.

This sequence belongs to the bacterial ribosomal protein bL25 family. CTC subfamily. Part of the 50S ribosomal subunit; part of the 5S rRNA/L5/L18/L25 subcomplex. Contacts the 5S rRNA. Binds to the 5S rRNA independently of L5 and L18.

Functionally, this is one of the proteins that binds to the 5S RNA in the ribosome where it forms part of the central protuberance. The protein is Large ribosomal subunit protein bL25 of Xanthomonas oryzae pv. oryzae (strain MAFF 311018).